The chain runs to 511 residues: Anthranilate synthase component 1 (511 aa).

The interval 1–36 (MTTHAAEAPTTDPQGAPGSQKTPDATEAEEAARATV) is disordered. Polar residues predominate over residues 11 to 23 (TDPQGAPGSQKTP). L-tryptophan-binding positions include S84 and 292–294 (PYM). 328–329 (GT) contributes to the chorismate binding site. E355 serves as a coordination point for Mg(2+). Chorismate-binding positions include Y443, R463, 477-479 (GAG), and G479. Mg(2+) is bound at residue E492.

It belongs to the anthranilate synthase component I family. In terms of assembly, heterotetramer consisting of two non-identical subunits: a beta subunit (TrpG) and a large alpha subunit (TrpE). The cofactor is Mg(2+).

The catalysed reaction is chorismate + L-glutamine = anthranilate + pyruvate + L-glutamate + H(+). It functions in the pathway amino-acid biosynthesis; L-tryptophan biosynthesis; L-tryptophan from chorismate: step 1/5. With respect to regulation, feedback inhibited by tryptophan. Part of a heterotetrameric complex that catalyzes the two-step biosynthesis of anthranilate, an intermediate in the biosynthesis of L-tryptophan. In the first step, the glutamine-binding beta subunit (TrpG) of anthranilate synthase (AS) provides the glutamine amidotransferase activity which generates ammonia as a substrate that, along with chorismate, is used in the second step, catalyzed by the large alpha subunit of AS (TrpE) to produce anthranilate. In the absence of TrpG, TrpE can synthesize anthranilate directly from chorismate and high concentrations of ammonia. This chain is Anthranilate synthase component 1 (trpE), found in Streptomyces coelicolor (strain ATCC BAA-471 / A3(2) / M145).